We begin with the raw amino-acid sequence, 152 residues long: Nucleoside diphosphate kinase (152 aa).

ATP is bound by residues Lys-11, Phe-59, Arg-87, Thr-93, Arg-104, and Asn-114. His-117 acts as the Pros-phosphohistidine intermediate in catalysis.

The protein belongs to the NDK family. Homotetramer. Requires Mg(2+) as cofactor.

It is found in the cytoplasm. It carries out the reaction a 2'-deoxyribonucleoside 5'-diphosphate + ATP = a 2'-deoxyribonucleoside 5'-triphosphate + ADP. It catalyses the reaction a ribonucleoside 5'-diphosphate + ATP = a ribonucleoside 5'-triphosphate + ADP. Its function is as follows. Major role in the synthesis of nucleoside triphosphates other than ATP. The ATP gamma phosphate is transferred to the NDP beta phosphate via a ping-pong mechanism, using a phosphorylated active-site intermediate. The chain is Nucleoside diphosphate kinase from Prochlorococcus marinus (strain MIT 9303).